A 546-amino-acid polypeptide reads, in one-letter code: Chromosomal replication initiator protein DnaA (546 aa).

The domain I, interacts with DnaA modulators stretch occupies residues 1–85 (MSDPQAALRA…TRALSQHMGR (85 aa)). A domain II region spans residues 85–204 (RPCSLAVTIA…EPAHNPNREK (120 aa)). Over residues 96 to 111 (PPQPAPQEEPPAPAPQ) the composition is skewed to pro residues. Residues 96–209 (PPQPAPQEEP…PNREKSLNPK (114 aa)) form a disordered region. The span at 126-145 (QTQAFQQPTQSTQPAPASQP) shows a compositional bias: low complexity. Positions 191–209 (IPREEPAHNPNREKSLNPK) are enriched in basic and acidic residues. A domain III, AAA+ region region spans residues 205 to 421 (SLNPKHTFEN…GALIRVSAYS (217 aa)). ATP is bound by residues Gly249, Gly251, Lys252, and Thr253. Residues 422–546 (SLVNEPISLE…TQRVKNHNQR (125 aa)) are domain IV, binds dsDNA.

Belongs to the DnaA family. In terms of assembly, oligomerizes as a right-handed, spiral filament on DNA at oriC.

Its subcellular location is the cytoplasm. Functionally, plays an essential role in the initiation and regulation of chromosomal replication. ATP-DnaA binds to the origin of replication (oriC) to initiate formation of the DNA replication initiation complex once per cell cycle. Binds the DnaA box (a 9 base pair repeat at the origin) and separates the double-stranded (ds)DNA. Forms a right-handed helical filament on oriC DNA; dsDNA binds to the exterior of the filament while single-stranded (ss)DNA is stabiized in the filament's interior. The ATP-DnaA-oriC complex binds and stabilizes one strand of the AT-rich DNA unwinding element (DUE), permitting loading of DNA polymerase. After initiation quickly degrades to an ADP-DnaA complex that is not apt for DNA replication. Binds acidic phospholipids. The protein is Chromosomal replication initiator protein DnaA of Corynebacterium aurimucosum (strain ATCC 700975 / DSM 44827 / CIP 107346 / CN-1) (Corynebacterium nigricans).